Reading from the N-terminus, the 133-residue chain is Small ribosomal subunit protein bS18 (133 aa).

The disordered stretch occupies residues 1-63; sequence MARPDMGGPK…GDEGGGRRGF (63 aa). A compositionally biased stretch (gly residues) spans 9-39; it reads PKTGGFGGPRSGGFGGGGGGGFGGGGFGGGR. The segment covering 40–59 has biased composition (basic and acidic residues); that stretch reads GGDRGDRGDRDDRGGDEGGG.

Belongs to the bacterial ribosomal protein bS18 family. In terms of assembly, part of the 30S ribosomal subunit. Forms a tight heterodimer with protein bS6.

Binds as a heterodimer with protein bS6 to the central domain of the 16S rRNA, where it helps stabilize the platform of the 30S subunit. This Anaeromyxobacter dehalogenans (strain 2CP-1 / ATCC BAA-258) protein is Small ribosomal subunit protein bS18.